Reading from the N-terminus, the 115-residue chain is Guanylin (115 aa).

The first 21 residues, 1-21, serve as a signal peptide directing secretion; sequence MNAFLLSALCLLGAWAALAGG. 3 disulfides stabilise this stretch: C69–C82, C104–C112, and C107–C115.

Belongs to the guanylin family. In terms of tissue distribution, highly expressed in ileum and colon. Found in plasma.

Its subcellular location is the secreted. Its function is as follows. Endogenous activator of intestinal guanylate cyclase. It stimulates this enzyme through the same receptor binding region as the heat-stable enterotoxins. The polypeptide is Guanylin (GUCA2A) (Homo sapiens (Human)).